The chain runs to 204 residues: FlaA locus 22.9 kDa protein (204 aa).

Positions 115-140 (EKTAEDQKKSSEDHTEGSADSKASSE) are disordered.

The chain is FlaA locus 22.9 kDa protein (ylxF) from Bacillus subtilis (strain 168).